Consider the following 471-residue polypeptide: Protoporphyrinogen oxidase (471 aa).

FAD is bound by residues 16–21, 39–40, Ala-47, 61–64, Val-251, Trp-408, and 446–448; these read GGGISG, ES, GPNS, and VGL.

Belongs to the protoporphyrinogen/coproporphyrinogen oxidase family. Protoporphyrinogen oxidase subfamily. In terms of assembly, monomer. Homodimer. FAD serves as cofactor.

It is found in the cytoplasm. It localises to the cell membrane. The enzyme catalyses protoporphyrinogen IX + 3 O2 = protoporphyrin IX + 3 H2O2. It participates in porphyrin-containing compound metabolism; protoporphyrin-IX biosynthesis; protoporphyrin-IX from protoporphyrinogen-IX: step 1/1. With respect to regulation, strongly inhibited by acifluorfen. Its function is as follows. Catalyzes the 6-electron oxidation of protoporphyrinogen-IX to form protoporphyrin-IX. Does not oxidize coproporphyrinogen III. Involved in the classical protoporphyrin-dependent (PPD) heme b biosynthesis. This is Protoporphyrinogen oxidase from Myxococcus xanthus.